The sequence spans 294 residues: Pyridoxal 5'-phosphate synthase subunit PdxS (294 aa).

Asp-24 is a D-ribose 5-phosphate binding site. The active-site Schiff-base intermediate with D-ribose 5-phosphate is Lys-81. Gly-153 lines the D-ribose 5-phosphate pocket. Arg-165 is a binding site for D-glyceraldehyde 3-phosphate. D-ribose 5-phosphate-binding positions include Gly-214 and 235–236; that span reads GS.

The protein belongs to the PdxS/SNZ family. In the presence of PdxT, forms a dodecamer of heterodimers.

It carries out the reaction aldehydo-D-ribose 5-phosphate + D-glyceraldehyde 3-phosphate + L-glutamine = pyridoxal 5'-phosphate + L-glutamate + phosphate + 3 H2O + H(+). It functions in the pathway cofactor biosynthesis; pyridoxal 5'-phosphate biosynthesis. Its function is as follows. Catalyzes the formation of pyridoxal 5'-phosphate from ribose 5-phosphate (RBP), glyceraldehyde 3-phosphate (G3P) and ammonia. The ammonia is provided by the PdxT subunit. Can also use ribulose 5-phosphate and dihydroxyacetone phosphate as substrates, resulting from enzyme-catalyzed isomerization of RBP and G3P, respectively. The protein is Pyridoxal 5'-phosphate synthase subunit PdxS of Bacillus velezensis (strain DSM 23117 / BGSC 10A6 / LMG 26770 / FZB42) (Bacillus amyloliquefaciens subsp. plantarum).